The following is a 574-amino-acid chain: MPDPAARRFSLPPFPLAALALSVALLGAPASLAQTAAPAPAPAQTPAAASRAAAPRVSWTKPLKVSSPVSIGPRGELTYVGNDSRVHRTDASGKELWSFALGDIGRAQPVLTPDGGVITAAYDDTVYALSPAGQLTWKAKLDGDVFASPALRPDGSVVVATAGGTVYALSSSGQTLWSYKVGAPVFSSPAVAADGTIYFGAQNGRLHALSPEGRLTWTYAARSSVFSSPALDAEGNLYFGSGDRSIYSLSPAGTLRWVQPTGLFVNASPIVTRAGLVVVGSYDGQLYALNTNGQVAWTYAAGAAIAAPAAELSDGSVVVGDLNGTLHAVTPTGQALWTLPGGAKIDTGAAVSDQGTLYFAVDGGNLNAVENLRPLATGPWPTFRASPLGWGRSATAAELTAQTQARQAAAAASTSQQPRLPTLAQAPAPTPAPAQTTPRPQPTPAQPATPAAPVPPVASPAPATARLTPQVIGGVIYLPLSPIAAGLGYQVQAGSPTRALLVAGSQRLTVPVRAVGGQSLIALRFVTGLPGVSVERQAGTLTLRREGLSAALPLDLAQLLPWAPQPEFPGVVRR.

An N-terminal signal peptide occupies residues 1 to 33; that stretch reads MPDPAARRFSLPPFPLAALALSVALLGAPASLA. Low complexity predominate over residues 400-438; that stretch reads TAQTQARQAAAAASTSQQPRLPTLAQAPAPTPAPAQTTP. A disordered region spans residues 400–461; sequence TAQTQARQAA…APVPPVASPA (62 aa). Over residues 439-459 the composition is skewed to pro residues; the sequence is RPQPTPAQPATPAAPVPPVAS.

In terms of biological role, plays an important role in resistance to desiccation and radiation, maybe by protecting genome integrity under extreme conditions. This is Desiccation/radiation resistance protein DR_1769 from Deinococcus radiodurans (strain ATCC 13939 / DSM 20539 / JCM 16871 / CCUG 27074 / LMG 4051 / NBRC 15346 / NCIMB 9279 / VKM B-1422 / R1).